The primary structure comprises 236 residues: Leucyl/phenylalanyl-tRNA--protein transferase (236 aa).

The protein belongs to the L/F-transferase family.

It localises to the cytoplasm. It catalyses the reaction N-terminal L-lysyl-[protein] + L-leucyl-tRNA(Leu) = N-terminal L-leucyl-L-lysyl-[protein] + tRNA(Leu) + H(+). The catalysed reaction is N-terminal L-arginyl-[protein] + L-leucyl-tRNA(Leu) = N-terminal L-leucyl-L-arginyl-[protein] + tRNA(Leu) + H(+). The enzyme catalyses L-phenylalanyl-tRNA(Phe) + an N-terminal L-alpha-aminoacyl-[protein] = an N-terminal L-phenylalanyl-L-alpha-aminoacyl-[protein] + tRNA(Phe). Its function is as follows. Functions in the N-end rule pathway of protein degradation where it conjugates Leu, Phe and, less efficiently, Met from aminoacyl-tRNAs to the N-termini of proteins containing an N-terminal arginine or lysine. The sequence is that of Leucyl/phenylalanyl-tRNA--protein transferase from Vibrio campbellii (strain ATCC BAA-1116).